The sequence spans 668 residues: Probable metal-nicotianamine transporter YSL5 (668 aa).

The segment covering 1-11 has biased composition (low complexity); sequence MPPPETSSAAA. The disordered stretch occupies residues 1–22; sequence MPPPETSSAAAPSPPSPDPLPP. Positions 12-22 are enriched in pro residues; that stretch reads PSPPSPDPLPP. Helical transmembrane passes span 27–47, 51–71, 102–122, 147–167, 209–229, 268–288, 315–335, 383–403, 410–430, 443–463, 501–521, 557–577, 595–615, and 633–653; these read LTLRGVAVAAVLGSLLCVVIH, LTVGVIPALNVASGLLAFFLA, CAIACGSLAFSGCSSSYIFAM, LGWMIGFMFLIALIGPFSIVM, LVKYMSLSFGWSFFKWFFSGV, IVNCSVFLGSVISWGFLWPFI, IAISVILGDGLYNLVKVFLII, LAVSGYIVLAAISTVAVPIIF, LVLVCYFLAPAIAFCNSYGMG, IALFVFASLVGSDGGVIAGLA, IGVALGCIIAPLTLWLFWTAF, LEICCVFFLAALIINLMKDVV, FYIGAYFGVDMFIGTLILFAW, and GLICGDGVWSIPSAVLSILGV.

Belongs to the YSL (TC 2.A.67.2) family. As to expression, expressed in roots.

It localises to the membrane. Functionally, may be involved in the transport of nicotianamine-chelated metals. The chain is Probable metal-nicotianamine transporter YSL5 (YSL5) from Oryza sativa subsp. japonica (Rice).